The chain runs to 412 residues: Multifunctional CCA protein (412 aa).

ATP contacts are provided by G8 and R11. CTP-binding residues include G8 and R11. Positions 21 and 23 each coordinate Mg(2+). Residues R91, R137, and R140 each contribute to the ATP site. 3 residues coordinate CTP: R91, R137, and R140. Residues 228–329 (TGIHTLMTLS…VKLFDSIDAW (102 aa)) enclose the HD domain.

The protein belongs to the tRNA nucleotidyltransferase/poly(A) polymerase family. Bacterial CCA-adding enzyme type 1 subfamily. As to quaternary structure, monomer. Can also form homodimers and oligomers. Mg(2+) serves as cofactor. Ni(2+) is required as a cofactor.

The catalysed reaction is a tRNA precursor + 2 CTP + ATP = a tRNA with a 3' CCA end + 3 diphosphate. It carries out the reaction a tRNA with a 3' CCA end + 2 CTP + ATP = a tRNA with a 3' CCACCA end + 3 diphosphate. In terms of biological role, catalyzes the addition and repair of the essential 3'-terminal CCA sequence in tRNAs without using a nucleic acid template. Adds these three nucleotides in the order of C, C, and A to the tRNA nucleotide-73, using CTP and ATP as substrates and producing inorganic pyrophosphate. tRNA 3'-terminal CCA addition is required both for tRNA processing and repair. Also involved in tRNA surveillance by mediating tandem CCA addition to generate a CCACCA at the 3' terminus of unstable tRNAs. While stable tRNAs receive only 3'-terminal CCA, unstable tRNAs are marked with CCACCA and rapidly degraded. This is Multifunctional CCA protein from Escherichia coli (strain K12 / MC4100 / BW2952).